Reading from the N-terminus, the 178-residue chain is Single-stranded DNA-binding protein DdrB (178 aa).

Residues 139 to 178 are disordered; it reads RYAVPGSNRPQAGAPARSAATRAQGARPGAVAVQDEETPF. Over residues 147–165 the composition is skewed to low complexity; the sequence is RPQAGAPARSAATRAQGAR.

Homopentamer; arranged in a ring-structure.

Its function is as follows. ssDNA-binding protein that probably contributes to the ionizing radiation resistance of D.geothermalis. Plays a role in DNA repair and genome reconstitution, in a RecA-independent process, and is necessary for recovery from severe genomic fragmentation as a result of exposure to severe levels of ionizing radiation. Binds single-stranded DNA but not duplex DNA. In Deinococcus geothermalis (strain DSM 11300 / CIP 105573 / AG-3a), this protein is Single-stranded DNA-binding protein DdrB (ddrB).